We begin with the raw amino-acid sequence, 181 residues long: Large ribosomal subunit protein bL19 (181 aa).

Residues 162–173 show a composition bias toward basic and acidic residues; it reads EKKAAAEAEAAK. The segment at 162–181 is disordered; sequence EKKAAAEAEAAKAAEATPAE.

Belongs to the bacterial ribosomal protein bL19 family.

In terms of biological role, this protein is located at the 30S-50S ribosomal subunit interface and may play a role in the structure and function of the aminoacyl-tRNA binding site. The polypeptide is Large ribosomal subunit protein bL19 (Mesorhizobium japonicum (strain LMG 29417 / CECT 9101 / MAFF 303099) (Mesorhizobium loti (strain MAFF 303099))).